A 215-amino-acid polypeptide reads, in one-letter code: 3-demethoxyubiquinol 3-hydroxylase (215 aa).

Fe cation contacts are provided by glutamate 64, glutamate 94, histidine 97, glutamate 146, glutamate 178, and histidine 181.

Belongs to the COQ7 family. The cofactor is Fe cation.

It is found in the cell membrane. It catalyses the reaction a 5-methoxy-2-methyl-3-(all-trans-polyprenyl)benzene-1,4-diol + AH2 + O2 = a 3-demethylubiquinol + A + H2O. It functions in the pathway cofactor biosynthesis; ubiquinone biosynthesis. Its function is as follows. Catalyzes the hydroxylation of 2-nonaprenyl-3-methyl-6-methoxy-1,4-benzoquinol during ubiquinone biosynthesis. The polypeptide is 3-demethoxyubiquinol 3-hydroxylase (Coxiella burnetii (strain Dugway 5J108-111)).